Reading from the N-terminus, the 451-residue chain is Phosphoglucosamine mutase (451 aa).

Ser-101 acts as the Phosphoserine intermediate in catalysis. Residues Ser-101, Asp-240, Asp-242, and Asp-244 each coordinate Mg(2+). Ser-101 bears the Phosphoserine mark.

It belongs to the phosphohexose mutase family. Requires Mg(2+) as cofactor. Post-translationally, activated by phosphorylation.

It carries out the reaction alpha-D-glucosamine 1-phosphate = D-glucosamine 6-phosphate. Functionally, catalyzes the conversion of glucosamine-6-phosphate to glucosamine-1-phosphate. In Streptococcus pyogenes serotype M2 (strain MGAS10270), this protein is Phosphoglucosamine mutase.